A 403-amino-acid polypeptide reads, in one-letter code: Shaggy-related protein kinase GSK4 (403 aa).

Residues 71–355 enclose the Protein kinase domain; sequence YMAERVVGTG…ALEACAHSFF (285 aa). Residues 77 to 85 and lysine 100 contribute to the ATP site; that span reads VGTGSFGVV. Residue aspartate 196 is the Proton acceptor of the active site.

This sequence belongs to the protein kinase superfamily. CMGC Ser/Thr protein kinase family. GSK-3 subfamily. As to quaternary structure, interacts with LIC.

It carries out the reaction L-seryl-[protein] + ATP = O-phospho-L-seryl-[protein] + ADP + H(+). It catalyses the reaction L-threonyl-[protein] + ATP = O-phospho-L-threonyl-[protein] + ADP + H(+). Probable serine-threonine kinase that may regulate brassinosteroid signaling. The polypeptide is Shaggy-related protein kinase GSK4 (Oryza sativa subsp. japonica (Rice)).